The chain runs to 126 residues: Sperm-specific H1/protamine-like protein type 2 (126 aa).

In terms of domain architecture, H15 spans 5 to 84 (KKPTTLSMIV…GATGSFRVGK (80 aa)). Residues 74 to 126 (SGATGSFRVGKAPASPKKAKKAKSPKKKSSKKSKNKSNNAKAKKSPKKKADSN) form a disordered region. Over residues 90-120 (KKAKKAKSPKKKSSKKSKNKSNNAKAKKSPK) the composition is skewed to basic residues.

OE2 and OE3 are produced by post-translational cleavage of a common precursor. In terms of tissue distribution, sperm.

The protein resides in the nucleus. It localises to the chromosome. Functionally, linker histones are implicated in chromatin remodeling and/or transcriptional regulation during spermiogenesis, the process of spermatid maturation into spermatozoa. Protamines substitute for histones in the chromatin of sperm during the haploid phase of spermatogenesis. They compact sperm DNA into a highly condensed, stable and inactive complex. The protein is Sperm-specific H1/protamine-like protein type 2 of Ostrea edulis (Native oyster).